The following is a 96-amino-acid chain: Co-chaperonin GroES (96 aa).

The protein belongs to the GroES chaperonin family. As to quaternary structure, heptamer of 7 subunits arranged in a ring. Interacts with the chaperonin GroEL.

Its subcellular location is the cytoplasm. Its function is as follows. Together with the chaperonin GroEL, plays an essential role in assisting protein folding. The GroEL-GroES system forms a nano-cage that allows encapsulation of the non-native substrate proteins and provides a physical environment optimized to promote and accelerate protein folding. GroES binds to the apical surface of the GroEL ring, thereby capping the opening of the GroEL channel. The chain is Co-chaperonin GroES from Shewanella halifaxensis (strain HAW-EB4).